Reading from the N-terminus, the 154-residue chain is Deoxyuridine 5'-triphosphate nucleotidohydrolase (154 aa).

Residues 64–66 (RSG), Asn77, 81–83 (TVD), and Lys91 contribute to the substrate site.

Belongs to the dUTPase family. In terms of assembly, homotrimer. Requires Mg(2+) as cofactor.

The catalysed reaction is dUTP + H2O = dUMP + diphosphate + H(+). Its pathway is pyrimidine metabolism; dUMP biosynthesis; dUMP from dCTP (dUTP route): step 2/2. In terms of biological role, this enzyme is involved in nucleotide metabolism: it produces dUMP, the immediate precursor of thymidine nucleotides and it decreases the intracellular concentration of dUTP so that uracil cannot be incorporated into DNA. The chain is Deoxyuridine 5'-triphosphate nucleotidohydrolase from Mycobacterium leprae (strain Br4923).